The following is a 274-amino-acid chain: Glycerol uptake facilitator protein (274 aa).

The next 2 membrane-spanning stretches (helical) occupy residues 3-23 (AFWG…GVCA) and 38-58 (IVVV…VGGI). Positions 64-66 (NPA) match the NPA 1 motif. Transmembrane regions (helical) follow at residues 82-102 (VPVY…IIYL), 131-151 (FANV…ILAI), and 164-184 (IVGF…GYAI). The NPA 2 signature appears at 185 to 187 (NPA). The helical transmembrane segment at 238-258 (ITSSFWIVSVILVVVLLGLYV) threads the bilayer.

It belongs to the MIP/aquaporin (TC 1.A.8) family.

Its subcellular location is the cell membrane. It carries out the reaction glycerol(in) = glycerol(out). Its function is as follows. Mediates glycerol diffusion across the cytoplasmic membrane via a pore-type mechanism. The sequence is that of Glycerol uptake facilitator protein (glpF) from Bacillus subtilis (strain 168).